A 219-amino-acid polypeptide reads, in one-letter code: 7-cyano-7-deazaguanine synthase (219 aa).

10 to 20 (FSGGQDSTTCL) is an ATP binding site. Zn(2+) contacts are provided by C188, C197, C200, and C203.

It belongs to the QueC family. In terms of assembly, homodimer. Requires Zn(2+) as cofactor.

It carries out the reaction 7-carboxy-7-deazaguanine + NH4(+) + ATP = 7-cyano-7-deazaguanine + ADP + phosphate + H2O + H(+). It participates in purine metabolism; 7-cyano-7-deazaguanine biosynthesis. In terms of biological role, catalyzes the ATP-dependent conversion of 7-carboxy-7-deazaguanine (CDG) to 7-cyano-7-deazaguanine (preQ(0)). This is 7-cyano-7-deazaguanine synthase from Clostridium botulinum (strain Loch Maree / Type A3).